The chain runs to 398 residues: Dual-specificity RNA methyltransferase RlmN (398 aa).

Catalysis depends on Glu-119, which acts as the Proton acceptor. Residues 125-364 enclose the Radical SAM core domain; the sequence is EADRATLCVS…TIVRKTRGDD (240 aa). A disulfide bridge connects residues Cys-132 and Cys-369. Residues Cys-139, Cys-143, and Cys-146 each contribute to the [4Fe-4S] cluster site. Residues 193-194, Ser-225, 247-249, and Asn-326 contribute to the S-adenosyl-L-methionine site; these read GE and SLH. Cys-369 functions as the S-methylcysteine intermediate in the catalytic mechanism.

It belongs to the radical SAM superfamily. RlmN family. [4Fe-4S] cluster serves as cofactor.

The protein resides in the cytoplasm. It carries out the reaction adenosine(2503) in 23S rRNA + 2 reduced [2Fe-2S]-[ferredoxin] + 2 S-adenosyl-L-methionine = 2-methyladenosine(2503) in 23S rRNA + 5'-deoxyadenosine + L-methionine + 2 oxidized [2Fe-2S]-[ferredoxin] + S-adenosyl-L-homocysteine. It catalyses the reaction adenosine(37) in tRNA + 2 reduced [2Fe-2S]-[ferredoxin] + 2 S-adenosyl-L-methionine = 2-methyladenosine(37) in tRNA + 5'-deoxyadenosine + L-methionine + 2 oxidized [2Fe-2S]-[ferredoxin] + S-adenosyl-L-homocysteine. Specifically methylates position 2 of adenine 2503 in 23S rRNA and position 2 of adenine 37 in tRNAs. m2A2503 modification seems to play a crucial role in the proofreading step occurring at the peptidyl transferase center and thus would serve to optimize ribosomal fidelity. The polypeptide is Dual-specificity RNA methyltransferase RlmN (Yersinia pseudotuberculosis serotype IB (strain PB1/+)).